We begin with the raw amino-acid sequence, 354 residues long: V-type proton ATPase subunit C (354 aa).

Belongs to the V-ATPase C subunit family. In terms of assembly, V-ATPase is a heteromultimeric enzyme composed of a peripheral catalytic V1 complex (components A to H) attached to an integral membrane V0 proton pore complex (components: a, c, c', c'' and d).

It localises to the vacuole membrane. In terms of biological role, subunit of the peripheral V1 complex of vacuolar ATPase. Subunit C is necessary for the assembly of the catalytic sector of the enzyme and is likely to have a specific function in its catalytic activity. V-ATPase is responsible for acidifying a variety of intracellular compartments in eukaryotic cells. The protein is V-type proton ATPase subunit C (VATC) of Hordeum vulgare (Barley).